The primary structure comprises 473 residues: Protein translocase subunit SecD (473 aa).

6 consecutive transmembrane segments (helical) span residues 5–25, 316–336, 337–357, 364–384, 409–429, and 436–456; these read VLVKWAVILVALFASVYLLYP, ASLYGIVIILILMAIYYKSGG, IISNIALILNLVFLLAAMAAF, PGIAGIILSLAMAIDANVLIL, WSAIFDSNFTSWIVALFLFQF, and GFAVTLTLGLLIGVFTSVFVT.

This sequence belongs to the SecD/SecF family. SecD subfamily. As to quaternary structure, forms a complex with SecF. Part of the essential Sec protein translocation apparatus which comprises SecA, SecYEG and auxiliary proteins SecDF. Other proteins may also be involved.

The protein localises to the cell inner membrane. In terms of biological role, part of the Sec protein translocase complex. Interacts with the SecYEG preprotein conducting channel. SecDF uses the proton motive force (PMF) to complete protein translocation after the ATP-dependent function of SecA. This Elusimicrobium minutum (strain Pei191) protein is Protein translocase subunit SecD.